The following is a 738-amino-acid chain: Glycogen [starch] synthase, muscle (738 aa).

Ser-8 is subject to Phosphoserine; by AMPK and PKA. Residue Ser-11 is modified to Phosphoserine. A UDP-binding site is contributed by Lys-39. Residues His-205 and Arg-211 each contribute to the UDP-alpha-D-glucose site. Alpha-D-glucose 6-phosphate is bound by residues His-291, Glu-292, Gln-294, His-297, and Lys-301. Position 331 (Arg-331) interacts with UDP. Arg-331 serves as a coordination point for UDP-alpha-D-glucose. Ser-412 bears the Phosphoserine mark. His-501 is an alpha-D-glucose 6-phosphate binding site. Glu-510, Trp-512, and Gly-513 together coordinate UDP-alpha-D-glucose. Thr-515 contacts UDP. Positions 582 and 586 each coordinate alpha-D-glucose 6-phosphate. Positions 632-738 (QGYRYPRPAS…PTSSLGEERN (107 aa)) are disordered. Ser-641 carries the phosphoserine; by DYRK2, GSK3-alpha, GSK3-beta and PASK modification. 6 positions are modified to phosphoserine: Ser-645, Ser-649, Ser-652, Ser-653, Ser-657, and Ser-672. The segment covering 658-681 (EDEEEPRDGPLGEDSERYDEEEEA) has biased composition (acidic residues). The span at 682–695 (AKDRRNIRAPEWPR) shows a compositional bias: basic and acidic residues. 3 positions are modified to phosphoserine: Ser-698, Ser-709, and Ser-711. The span at 698-738 (SCSSSTGGSKRSNSVDTGPSSSLSTPTEPLSPTSSLGEERN) shows a compositional bias: low complexity. A phosphothreonine mark is found at Thr-722 and Thr-724. A phosphoserine mark is found at Ser-728 and Ser-732.

It belongs to the glycosyltransferase 3 family. As to quaternary structure, part of the GYS1-GYG1 complex, a heterooctamer composed of a tetramer of GYS1 and 2 dimers of GYG1, where each GYS1 protomer binds to one GYG1 subunit (via GYG1 C-terminus); the GYS1 tetramer may dissociate from GYG1 dimers to continue glycogen polymerization on its own. In terms of processing, primed phosphorylation at Ser-657 (site 5) by CSNK2A1 and CSNK2A2 is required for inhibitory phosphorylation at Ser-641 (site 3a), Ser-645 (site 3b), Ser-649 (site 3c) and Ser-653 (site 4) by GSK3A an GSK3B. Phosphorylated at Ser-641 by PASK, leading to inactivation; phosphorylation by PASK is inhibited by glycogen. Phosphorylated at Ser-641 by DYRK2, leading to inactivation. Dephosphorylation at Ser-641 and Ser-645 by PP1 activates the enzyme. Phosphorylation at Ser-8 by AMPK inactivates the enzyme activity.

It catalyses the reaction [(1-&gt;4)-alpha-D-glucosyl](n) + UDP-alpha-D-glucose = [(1-&gt;4)-alpha-D-glucosyl](n+1) + UDP + H(+). It functions in the pathway glycan biosynthesis; glycogen biosynthesis. Allosteric activation by glucose-6-phosphate. Phosphorylation reduces the activity towards UDP-glucose. When in the non-phosphorylated state, glycogen synthase does not require glucose-6-phosphate as an allosteric activator; when phosphorylated it does. Glycogen synthase participates in the glycogen biosynthetic process along with glycogenin and glycogen branching enzyme. Extends the primer composed of a few glucose units formed by glycogenin by adding new glucose units to it. In this context, glycogen synthase transfers the glycosyl residue from UDP-Glc to the non-reducing end of alpha-1,4-glucan. This is Glycogen [starch] synthase, muscle (Gys1) from Mus musculus (Mouse).